The following is a 439-amino-acid chain: Proline--tRNA ligase (439 aa).

The protein belongs to the class-II aminoacyl-tRNA synthetase family. ProS type 2 subfamily. Homodimer.

The protein resides in the cytoplasm. The catalysed reaction is tRNA(Pro) + L-proline + ATP = L-prolyl-tRNA(Pro) + AMP + diphosphate. Its function is as follows. Catalyzes the attachment of proline to tRNA(Pro) in a two-step reaction: proline is first activated by ATP to form Pro-AMP and then transferred to the acceptor end of tRNA(Pro). This is Proline--tRNA ligase from Parvibaculum lavamentivorans (strain DS-1 / DSM 13023 / NCIMB 13966).